Consider the following 220-residue polypeptide: Chaperone protein TorD (220 aa).

Belongs to the TorD/DmsD family. TorD subfamily.

It is found in the cytoplasm. Its function is as follows. Involved in the biogenesis of TorA. Acts on TorA before the insertion of the molybdenum cofactor and, as a result, probably favors a conformation of the apoenzyme that is competent for acquiring the cofactor. The chain is Chaperone protein TorD from Vibrio cholerae serotype O1 (strain M66-2).